We begin with the raw amino-acid sequence, 394 residues long: ORC1-type DNA replication protein 3 (394 aa).

Residues 66–70 (TGKTF) and Tyr-207 each bind ATP.

The protein belongs to the CDC6/cdc18 family. In terms of assembly, monomer. Interacts with Cdc6-1, Cdc6-2, MCM and PolB1.

In terms of biological role, involved in regulation of DNA replication. May play essential roles in origin recognition and cell cycle control of replication. Binds to DNA, with a preference for molecules that contain a bubble, a fork, or a tail. Inhibits the binding of the MCM helicase to the origin DNA and inhibits its DNA helicase activity. Also regulates the DNA polymerase and the nuclease activities of PolB1. Inhibits the DNA-binding activity of Cdc6-1 and Cdc6-2. The chain is ORC1-type DNA replication protein 3 (cdc6-3) from Saccharolobus solfataricus (strain ATCC 35092 / DSM 1617 / JCM 11322 / P2) (Sulfolobus solfataricus).